A 542-amino-acid chain; its full sequence is Chromatin structure-remodeling complex subunit rsc4 (542 aa).

One can recognise a Bromo 1 domain in the interval 6–116; the sequence is HNAPFDKTKF…NTANSLESKD (111 aa). 2 disordered regions span residues 114 to 139 and 246 to 327; these read SKDG…KPGT and ISSF…PIPE. Residues 119-128 show a composition bias toward acidic residues; that stretch reads LNEEENEEME. Positions 139 to 249 constitute a Bromo 2 domain; it reads TNEIDVPKVI…QLSSSLISSF (111 aa). Residues 252–266 are compositionally biased toward basic and acidic residues; the sequence is QPKEHSPATSKHEPE. 4 positions are modified to phosphoserine: serine 257, serine 271, serine 287, and serine 313. A compositionally biased stretch (low complexity) spans 268 to 280; it reads TPASPTPSVSAST. Positions 286 to 298 are enriched in polar residues; sequence TSVAPSFITSDQA. The segment covering 304–322 has biased composition (basic and acidic residues); the sequence is LKSEEAHVESFSKESEKDQ.

As to quaternary structure, component of the RSC complex composed of at least arp9, arp42, rsc1, rsc4, rsc7, rsc9, rsc58, sfh1, snf21, ssr1, ssr2, ssr3 and ssr4. The complex interacts with histone and histone variant components of centromeric chromatin.

It is found in the nucleus. Its function is as follows. Component of the chromatin structure remodeling complex (RSC), which is involved in transcription regulation and nucleosome positioning. Controls particularly membrane and organelle development genes. The chain is Chromatin structure-remodeling complex subunit rsc4 (rsc4) from Schizosaccharomyces pombe (strain 972 / ATCC 24843) (Fission yeast).